The primary structure comprises 263 residues: uncharacterized protein (263 aa).

The signal sequence occupies residues 1-22 (MEYLKRLALLISVIILTIFIMG). The N-palmitoyl cysteine moiety is linked to residue C23. C23 carries the S-diacylglycerol cysteine lipid modification.

The protein belongs to the staphylococcal tandem lipoprotein family.

The protein localises to the cell membrane. This is an uncharacterized protein from Staphylococcus aureus (strain USA300).